Here is a 272-residue protein sequence, read N- to C-terminus: Magnetosome protein MamQ (272 aa).

At 1–46 (MAVSDADASSVDKVESITLQRVKQSEELLAQLYVVEESPRRMGRGP) the chain is on the cytoplasmic side. A helical transmembrane segment spans residues 47 to 67 (VQLMLAISVLSLVAFITTLLM). The Lumenal segment spans residues 68-272 (RYNAFVTMYE…PLTHSQESKN (205 aa)).

This sequence belongs to the LemA family.

The protein resides in the magnetosome membrane. It localises to the cell inner membrane. In terms of biological role, essential for magnetosome formation. Not essential for formation of magnetosome membrane vesicles. One of 7 genes (mamLQBIEMO) able to induce magnetosome membrane biogenesis; coexpression of mamLQRBIEMO in a deletion of the 17 gene mamAB operon restores magnetosome vesicle formation but not magnetite biosynthesis. This chain is Magnetosome protein MamQ, found in Magnetospirillum gryphiswaldense (strain DSM 6361 / JCM 21280 / NBRC 15271 / MSR-1).